Here is a 1476-residue protein sequence, read N- to C-terminus: Glucosyltransferase-I (1476 aa).

A signal peptide spans 1 to 34 (MDKKVRYKLRKVKKRWVTVSVASAVMTLTTLSGG). 2 disordered regions span residues 42 to 89 (ESKS…ISSS) and 102 to 141 (PYTVGETASNGEKLQNQTTTVDKTSEAAANNISKQTTEAD). 2 stretches are compositionally biased toward polar residues: residues 43-81 (SKSQISNDSNTSVVTANEESNVTTEVTSKQEAASSQTNH) and 102-139 (PYTVGETASNGEKLQNQTTTVDKTSEAAANNISKQTTE). 2 Cell wall-binding repeats span residues 159–178 (LPNVKEIDGKYYYYDNNGKV) and 179–199 (RTNFTLIADGKILHFDETGAY). The interval 200 to 1051 (TDTSIDTVNK…NTYFNISDNK (852 aa)) is catalytic; approximate. 11 Cell wall-binding repeats span residues 1087–1106 (KNTFISEGDKWYYFDNNGYM), 1107–1126 (VTGAQSINGVNYYFLSNGLQ), 1170–1189 (SVGLTVIDGQVQYFDEMGYQ), 1214–1234 (RNRFIENEEGKWLYLGEDGAA), 1235–1254 (VTGSQTINGQHLYFRANGVQ), 1279–1299 (RNRFVRNAQGQWFYFDNNGYA), 1300–1319 (VTGARTINGQHLYFRANGVQ), 1344–1364 (RNRFVRNAQGQWFYFDNNGYA), 1365–1384 (VTGARTINGQHLYFRANGVQ), 1409–1429 (RNRFVRNAQGQWFYFDNNGYA), and 1430–1449 (VTGARTINGQHLYFRANGVQ).

Belongs to the glycosyl hydrolase 70 family.

Its subcellular location is the secreted. It catalyses the reaction [(1-&gt;6)-alpha-D-glucosyl](n) + sucrose = [(1-&gt;6)-alpha-D-glucosyl](n+1) + D-fructose. Production of extracellular glucans, that are thought to play a key role in the development of the dental plaque because of their ability to adhere to smooth surfaces and mediate the aggregation of bacterial cells and food debris. The polypeptide is Glucosyltransferase-I (gtfB) (Streptococcus mutans serotype c (strain ATCC 700610 / UA159)).